The sequence spans 430 residues: Adenylosuccinate synthetase (430 aa).

Residues 11 to 17 (GDEGKGK) and 39 to 41 (GHT) contribute to the GTP site. D12 (proton acceptor) is an active-site residue. Positions 12 and 39 each coordinate Mg(2+). IMP-binding positions include 12–15 (DEGK), 37–40 (NAGH), T130, R144, N226, T241, and R305. The active-site Proton donor is H40. Substrate is bound at residue 301–307 (VTTGRKR). GTP contacts are provided by residues R307, 333-335 (KLD), and 415-417 (GTG).

The protein belongs to the adenylosuccinate synthetase family. In terms of assembly, homodimer. Mg(2+) serves as cofactor.

It localises to the cytoplasm. It carries out the reaction IMP + L-aspartate + GTP = N(6)-(1,2-dicarboxyethyl)-AMP + GDP + phosphate + 2 H(+). Its pathway is purine metabolism; AMP biosynthesis via de novo pathway; AMP from IMP: step 1/2. Plays an important role in the de novo pathway and in the salvage pathway of purine nucleotide biosynthesis. Catalyzes the first committed step in the biosynthesis of AMP from IMP. In Scheffersomyces stipitis (strain ATCC 58785 / CBS 6054 / NBRC 10063 / NRRL Y-11545) (Yeast), this protein is Adenylosuccinate synthetase.